The primary structure comprises 105 residues: Nucleoid-associated protein TTHA1599 (105 aa).

The protein belongs to the YbaB/EbfC family. As to quaternary structure, homodimer.

It localises to the cytoplasm. Its subcellular location is the nucleoid. Its function is as follows. Binds to DNA and alters its conformation. May be involved in regulation of gene expression, nucleoid organization and DNA protection. The protein is Nucleoid-associated protein TTHA1599 of Thermus thermophilus (strain ATCC 27634 / DSM 579 / HB8).